A 963-amino-acid polypeptide reads, in one-letter code: Collagen alpha-1(I) chain (963 aa).

The disordered stretch occupies residues 1 to 963 (GPMGPSGPRG…PGPPGPPGPP (963 aa)). Positions 40-54 (NGDDGEAGKPGRPGE) are enriched in basic and acidic residues. Residue S82 is modified to Phosphoserine. Composition is skewed to low complexity over residues 90 to 106 (DAGP…PGEN) and 129 to 142 (PAGA…TGAA). Over residues 144-156 (PPGPTGPAGPPGF) the composition is skewed to pro residues. A compositionally biased stretch (low complexity) spans 190–229 (AGAAGPAGNPGADGQPGAKGANGAPGIAGAPGFPGARGPS). Gly residues predominate over residues 296 to 305 (GERGGPGARG). 6 stretches are compositionally biased toward low complexity: residues 313–337 (AGPK…PGEA), 349–375 (KGIT…QDGR), 384–403 (ARGQ…AGEP), 482–495 (PRGA…DGAK), 555–569 (SGPS…ARGA), and 582–609 (AGFA…KGDA). Phosphoserine is present on S558. Residues 611–623 (PPGPAGPTGPPGP) are compositionally biased toward pro residues. 3 stretches are compositionally biased toward low complexity: residues 638–654 (SAGP…AGRV), 683–692 (ETGPAGRPGE), and 702–726 (AGEK…QGIA). Composition is skewed to pro residues over residues 767–777 (PPGPVGPPGIA) and 813–828 (AGPP…PGPV). Residues 849–863 (IGPVGARGPAGPQGP) show a composition bias toward low complexity. A compositionally biased stretch (basic and acidic residues) spans 864–878 (RGDKGETGEQGDRGI). Positions 897–930 (PGEQGPSGASGPAGPRGPPGSAGAPGKDGINGIP) are enriched in low complexity. A compositionally biased stretch (pro residues) spans 948–963 (VGPPGPPGPPGPPGPP).

It belongs to the fibrillar collagen family. As to quaternary structure, trimers of one alpha 2(I) and two alpha 1(I) chains. Post-translationally, prolines at the third position of the tripeptide repeating unit (G-X-Y) are hydroxylated in some or all of the chains. As to expression, forms the fibrils of tendon, ligaments and bones. In bones, the fibrils are mineralized with calcium hydroxyapatite.

It is found in the secreted. The protein localises to the extracellular space. It localises to the extracellular matrix. Its function is as follows. Type I collagen is a member of group I collagen (fibrillar forming collagen). In Tapirus terrestris (Lowland tapir), this protein is Collagen alpha-1(I) chain.